A 156-amino-acid polypeptide reads, in one-letter code: Small ribosomal subunit protein uS7 (156 aa).

This sequence belongs to the universal ribosomal protein uS7 family. Part of the 30S ribosomal subunit. Contacts proteins S9 and S11.

One of the primary rRNA binding proteins, it binds directly to 16S rRNA where it nucleates assembly of the head domain of the 30S subunit. Is located at the subunit interface close to the decoding center, probably blocks exit of the E-site tRNA. The polypeptide is Small ribosomal subunit protein uS7 (Carsonella ruddii (strain PV)).